Here is a 170-residue protein sequence, read N- to C-terminus: Lipoprotein signal peptidase (170 aa).

Transmembrane regions (helical) follow at residues 11 to 31 (LSWL…KFYF), 41 to 61 (IVVI…AAFS), 69 to 89 (WQRW…VVWL), and 95 to 115 (NETW…GNLY). Catalysis depends on residues D125 and D144. The helical transmembrane segment at 136–156 (YFPAFNFADSAITVGAVMLAL) threads the bilayer.

Belongs to the peptidase A8 family.

The protein localises to the cell inner membrane. The catalysed reaction is Release of signal peptides from bacterial membrane prolipoproteins. Hydrolyzes -Xaa-Yaa-Zaa-|-(S,diacylglyceryl)Cys-, in which Xaa is hydrophobic (preferably Leu), and Yaa (Ala or Ser) and Zaa (Gly or Ala) have small, neutral side chains.. It functions in the pathway protein modification; lipoprotein biosynthesis (signal peptide cleavage). Functionally, this protein specifically catalyzes the removal of signal peptides from prolipoproteins. This chain is Lipoprotein signal peptidase, found in Pseudomonas fluorescens (strain Pf0-1).